Here is a 512-residue protein sequence, read N- to C-terminus: DNA damage-binding protein CMR1 (512 aa).

The disordered stretch occupies residues 32–96; sequence SQIKREAGVE…IPNVNDNQLL (65 aa). Over residues 34–46 the composition is skewed to basic and acidic residues; the sequence is IKREAGVEDEHLD. Residues 47 to 60 show a composition bias toward basic residues; it reads RKRKKKAGSAKKAV. WD repeat units lie at residues 189–230, 241–281, 289–329, 333–373, 390–429, 442–481, and 482–512; these read LTAE…PEDE, LFTK…SEEI, DDPL…TEIN, LSDK…NKPE, DSRL…PEDL, GRWT…LAHL, and PTAT…FLFT.

The protein belongs to the WD repeat DDB2/WDR76 family.

In terms of biological role, DNA-binding protein that binds to both single- and double-stranded DNA. Binds preferentially to UV-damaged DNA. May be involved in DNA-metabolic processes. The polypeptide is DNA damage-binding protein CMR1 (Kluyveromyces lactis (strain ATCC 8585 / CBS 2359 / DSM 70799 / NBRC 1267 / NRRL Y-1140 / WM37) (Yeast)).